A 254-amino-acid polypeptide reads, in one-letter code: 3-oxo-5-alpha-steroid 4-dehydrogenase 2 (254 aa).

Transmembrane regions (helical) follow at residues 8–28 (VPVLAGSATLATMGTLILCFG), 72–92 (PRSLFGPPGNVLLGLFSAHYF), 146–166 (FSVGVFFFILGMGINIHSDCM), and 206–226 (LATWSVPAFAFAFFTLCFLGM).

The protein belongs to the steroid 5-alpha reductase family.

The protein localises to the microsome membrane. Its subcellular location is the endoplasmic reticulum membrane. It carries out the reaction a 3-oxo-5alpha-steroid + NADP(+) = a 3-oxo-Delta(4)-steroid + NADPH + H(+). The catalysed reaction is 17beta-hydroxy-5alpha-androstan-3-one + NADP(+) = testosterone + NADPH + H(+). It catalyses the reaction 5alpha-pregnane-3,20-dione + NADP(+) = progesterone + NADPH + H(+). Functionally, converts testosterone (T) into 5-alpha-dihydrotestosterone (DHT) and progesterone or corticosterone into their corresponding 5-alpha-3-oxosteroids. It plays a central role in sexual differentiation and androgen physiology. The protein is 3-oxo-5-alpha-steroid 4-dehydrogenase 2 (Srd5a2) of Mus musculus (Mouse).